The sequence spans 627 residues: Phosphomethylpyrimidine synthase (627 aa).

Polar residues predominate over residues 1-21 (MSAQQQKNLSESAQVDQQSVQ). The tract at residues 1–32 (MSAQQQKNLSESAQVDQQSVQPFPRSQKVYVQ) is disordered. Substrate contacts are provided by residues Asn-231, Met-260, Tyr-289, His-325, 345-347 (SRG), 386-389 (DGLR), and Glu-425. His-429 contributes to the Zn(2+) binding site. Substrate is bound at residue Tyr-452. His-493 contacts Zn(2+). [4Fe-4S] cluster is bound by residues Cys-573, Cys-576, and Cys-581.

This sequence belongs to the ThiC family. In terms of assembly, homodimer. [4Fe-4S] cluster serves as cofactor.

It carries out the reaction 5-amino-1-(5-phospho-beta-D-ribosyl)imidazole + S-adenosyl-L-methionine = 4-amino-2-methyl-5-(phosphooxymethyl)pyrimidine + CO + 5'-deoxyadenosine + formate + L-methionine + 3 H(+). It functions in the pathway cofactor biosynthesis; thiamine diphosphate biosynthesis. Its function is as follows. Catalyzes the synthesis of the hydroxymethylpyrimidine phosphate (HMP-P) moiety of thiamine from aminoimidazole ribotide (AIR) in a radical S-adenosyl-L-methionine (SAM)-dependent reaction. The sequence is that of Phosphomethylpyrimidine synthase from Ectopseudomonas mendocina (strain ymp) (Pseudomonas mendocina).